Here is a 1040-residue protein sequence, read N- to C-terminus: Vitamin B12-dependent ribonucleotide reductase (1040 aa).

Substrate-binding positions include serine 169, 213-214 (AC), glycine 242, 420-424 (NPCSE), and 604-608 (PTGTI). Cysteine 214 and cysteine 433 form a disulfide bridge. The active-site Proton acceptor is the asparagine 420. The Cysteine radical intermediate role is filled by cysteine 422. Glutamate 424 serves as the catalytic Proton acceptor. Disordered regions lie at residues 909-932 (SAEG…GATA) and 969-988 (GSAT…SDGA). A compositionally biased stretch (polar residues) spans 969–979 (GSATNGHSNGQ).

The protein belongs to the ribonucleoside diphosphate reductase class-2 family. The cofactor is adenosylcob(III)alamin.

The catalysed reaction is a 2'-deoxyribonucleoside 5'-diphosphate + [thioredoxin]-disulfide + H2O = a ribonucleoside 5'-diphosphate + [thioredoxin]-dithiol. In terms of biological role, catalyzes the reduction of ribonucleotides to deoxyribonucleotides. May function to provide a pool of deoxyribonucleotide precursors for DNA repair during oxygen limitation and/or for immediate growth after restoration of oxygen. The polypeptide is Vitamin B12-dependent ribonucleotide reductase (nrdJ) (Rhodopirellula baltica (strain DSM 10527 / NCIMB 13988 / SH1)).